The chain runs to 393 residues: NAD(P)H-quinone oxidoreductase subunit H, chloroplastic (393 aa).

Belongs to the complex I 49 kDa subunit family. NDH is composed of at least 16 different subunits, 5 of which are encoded in the nucleus.

It localises to the plastid. Its subcellular location is the chloroplast thylakoid membrane. It catalyses the reaction a plastoquinone + NADH + (n+1) H(+)(in) = a plastoquinol + NAD(+) + n H(+)(out). The catalysed reaction is a plastoquinone + NADPH + (n+1) H(+)(in) = a plastoquinol + NADP(+) + n H(+)(out). Its function is as follows. NDH shuttles electrons from NAD(P)H:plastoquinone, via FMN and iron-sulfur (Fe-S) centers, to quinones in the photosynthetic chain and possibly in a chloroplast respiratory chain. The immediate electron acceptor for the enzyme in this species is believed to be plastoquinone. Couples the redox reaction to proton translocation, and thus conserves the redox energy in a proton gradient. The sequence is that of NAD(P)H-quinone oxidoreductase subunit H, chloroplastic from Solanum bulbocastanum (Wild potato).